A 337-amino-acid chain; its full sequence is Pyridoxal 5'-phosphate synthase subunit PdxS (337 aa).

D-ribose 5-phosphate is bound at residue Asp-63. The Schiff-base intermediate with D-ribose 5-phosphate role is filled by Lys-120. Residue Gly-192 participates in D-ribose 5-phosphate binding. Lys-204 lines the D-glyceraldehyde 3-phosphate pocket. D-ribose 5-phosphate is bound by residues Gly-253 and 274 to 275 (GS).

The protein belongs to the PdxS/SNZ family. In the presence of PdxT, forms a dodecamer of heterodimers.

The enzyme catalyses aldehydo-D-ribose 5-phosphate + D-glyceraldehyde 3-phosphate + L-glutamine = pyridoxal 5'-phosphate + L-glutamate + phosphate + 3 H2O + H(+). It participates in cofactor biosynthesis; pyridoxal 5'-phosphate biosynthesis. Its function is as follows. Catalyzes the formation of pyridoxal 5'-phosphate from ribose 5-phosphate (RBP), glyceraldehyde 3-phosphate (G3P) and ammonia. The ammonia is provided by the PdxT subunit. Can also use ribulose 5-phosphate and dihydroxyacetone phosphate as substrates, resulting from enzyme-catalyzed isomerization of RBP and G3P, respectively. The polypeptide is Pyridoxal 5'-phosphate synthase subunit PdxS (Aeropyrum pernix (strain ATCC 700893 / DSM 11879 / JCM 9820 / NBRC 100138 / K1)).